A 149-amino-acid polypeptide reads, in one-letter code: Small ribosomal subunit protein bS6 (149 aa).

The interval 94-149 (EKHEEGPSAMMQKRDRDDRPRRDGDRPDRGGFGDRGPRPDRGDRDDRPRRPREDRA) is disordered.

It belongs to the bacterial ribosomal protein bS6 family.

In terms of biological role, binds together with bS18 to 16S ribosomal RNA. This is Small ribosomal subunit protein bS6 from Sinorhizobium fredii (strain NBRC 101917 / NGR234).